The following is a 429-amino-acid chain: Threonine synthase (429 aa).

Lys-108 is subject to N6-(pyridoxal phosphate)lysine.

The protein belongs to the threonine synthase family. Requires pyridoxal 5'-phosphate as cofactor.

It catalyses the reaction O-phospho-L-homoserine + H2O = L-threonine + phosphate. It participates in amino-acid biosynthesis; L-threonine biosynthesis; L-threonine from L-aspartate: step 5/5. Catalyzes the gamma-elimination of phosphate from L-phosphohomoserine and the beta-addition of water to produce L-threonine. In Buchnera aphidicola subsp. Acyrthosiphon pisum (strain APS) (Acyrthosiphon pisum symbiotic bacterium), this protein is Threonine synthase (thrC).